The following is a 378-amino-acid chain: uncharacterized protein (378 aa).

In terms of domain architecture, Guanylate cyclase spans 208–317 (GIGFADLSSF…NPVNLAARLV (110 aa)).

It belongs to the adenylyl cyclase class-4/guanylyl cyclase family.

This is an uncharacterized protein from Mycobacterium bovis (strain ATCC BAA-935 / AF2122/97).